The primary structure comprises 808 residues: Disks large-associated protein 5 (808 aa).

A phosphoserine mark is found at Ser-66 and Ser-70. The stretch at 88-119 (QRKQLLQKYKEEKQLQKLKEQREKAKRGVFKV) forms a coiled coil. The interval 134–282 (QRGAKAEPEK…QTRETSEMGP (149 aa)) is disordered. Composition is skewed to basic and acidic residues over residues 135–145 (RGAKAEPEKAF) and 180–193 (QTSE…ERKV). A Phosphoserine modification is found at Ser-201. Composition is skewed to basic and acidic residues over residues 232-241 (TNEKGSERMR) and 249-278 (KKPE…RETS). Ser-328 is subject to Phosphoserine. Residues Thr-337 and Thr-386 each carry the phosphothreonine modification. The segment at 377-413 (HVLNQKGASTSDSNHASVKGVPCSEGSEGQTSQPPHD) is disordered. Residues 382-392 (KGASTSDSNHA) are compositionally biased toward polar residues. Ser-598 is subject to Phosphoserine. Ser-607 is modified (phosphoserine; by AURKA). Ser-612 is modified (phosphoserine). A Phosphothreonine modification is found at Thr-617. Ser-620 is modified (phosphoserine). The disordered stretch occupies residues 629–654 (RAAGDLLRQKMPLKKPDPQSSKSEHV). Over residues 642-654 (KKPDPQSSKSEHV) the composition is skewed to basic and acidic residues. The residue at position 728 (Thr-728) is a Phosphothreonine. Positions 735-757 (SNPETNTSSQSNTSQEEAEASQS) are disordered. Ser-743 is modified (phosphoserine). Ser-797 carries the post-translational modification Phosphoserine; by AURKA. Residue Ser-806 is modified to Phosphoserine.

Belongs to the SAPAP family. As to quaternary structure, interacts with CDC2. Interacts with the C-terminal proline-rich region of FBXO7. Recruited by FBXO7 to a SCF (SKP1-CUL1-F-box) protein complex in a CDC2/Cyclin B-phosphorylation dependent manner. Interacts with CDH1. In terms of processing, ubiquitinated, leading to its degradation. Decreased phosphorylation levels are associated with the differentiation of intestinal epithelial cells. In terms of tissue distribution, expressed at low levels in normal resting liver. Up-regulated in regenerating liver after partial hepatectomy.

The protein resides in the nucleus. It is found in the cytoplasm. The protein localises to the cytoskeleton. Its subcellular location is the spindle. Potential cell cycle regulator that may play a role in carcinogenesis of cancer cells. Mitotic phosphoprotein regulated by the ubiquitin-proteasome pathway. Key regulator of adherens junction integrity and differentiation that may be involved in CDH1-mediated adhesion and signaling in epithelial cells. This chain is Disks large-associated protein 5 (Dlgap5), found in Mus musculus (Mouse).